The sequence spans 391 residues: Probable sugar efflux transporter (391 aa).

12 helical membrane passes run Val-16 to Leu-36, Val-51 to Leu-71, Leu-82 to Phe-102, Trp-103 to Thr-123, Gln-138 to Gly-158, Thr-170 to Pro-190, Pro-210 to Tyr-230, Ile-247 to Gly-267, Phe-277 to Asn-297, Trp-300 to Leu-320, Ile-338 to Ile-358, and Leu-361 to Leu-381.

The protein belongs to the major facilitator superfamily. SotB (TC 2.A.1.2) family.

It localises to the cell inner membrane. Functionally, involved in the efflux of sugars. The physiological role may be the reduction of the intracellular concentration of toxic sugars or sugar metabolites. This is Probable sugar efflux transporter from Helicobacter pylori (strain P12).